Consider the following 89-residue polypeptide: Small ribosomal subunit protein uS15 (89 aa).

This sequence belongs to the universal ribosomal protein uS15 family. Part of the 30S ribosomal subunit. Forms a bridge to the 50S subunit in the 70S ribosome, contacting the 23S rRNA.

Functionally, one of the primary rRNA binding proteins, it binds directly to 16S rRNA where it helps nucleate assembly of the platform of the 30S subunit by binding and bridging several RNA helices of the 16S rRNA. Its function is as follows. Forms an intersubunit bridge (bridge B4) with the 23S rRNA of the 50S subunit in the ribosome. This Azoarcus sp. (strain BH72) protein is Small ribosomal subunit protein uS15.